The primary structure comprises 73 residues: uncharacterized protein (73 aa).

This is an uncharacterized protein from Treponema pallidum (strain Nichols).